A 177-amino-acid polypeptide reads, in one-letter code: Glutamyl-tRNA(Gln) amidotransferase subunit F, mitochondrial (177 aa).

The N-terminal 16 residues, 1–16, are a transit peptide targeting the mitochondrion; that stretch reads MIRINSRGLTVSTRRF. The tract at residues 148 to 177 is disordered; it reads PAKGETQGSFNVANMNPRNRPFATIRSKQG. A compositionally biased stretch (polar residues) spans 153–164; sequence TQGSFNVANMNP.

This sequence belongs to the GatF family. As to quaternary structure, subunit of the heterotrimeric GatFAB amidotransferase (AdT) complex, composed of A, B and F subunits.

Its subcellular location is the mitochondrion inner membrane. The catalysed reaction is L-glutamyl-tRNA(Gln) + L-glutamine + ATP + H2O = L-glutaminyl-tRNA(Gln) + L-glutamate + ADP + phosphate + H(+). Its function is as follows. Allows the formation of correctly charged Gln-tRNA(Gln) through the transamidation of misacylated Glu-tRNA(Gln) in the mitochondria. The reaction takes place in the presence of glutamine and ATP through an activated gamma-phospho-Glu-tRNA(Gln). Required for proper protein synthesis within the mitochondrion. In Scheffersomyces stipitis (strain ATCC 58785 / CBS 6054 / NBRC 10063 / NRRL Y-11545) (Yeast), this protein is Glutamyl-tRNA(Gln) amidotransferase subunit F, mitochondrial.